We begin with the raw amino-acid sequence, 727 residues long: AN1-type zinc finger protein 4 (727 aa).

A Ubiquitin-like domain is found at 28–103; it reads MELFIETLTG…LKLVLAMRGG (76 aa). Disordered stretches follow at residues 187 to 217 and 238 to 264; these read HRMS…IIEN and KKPK…TAPS. Over residues 238-248 the composition is skewed to basic residues; that stretch reads KKPKKAVKIKP. An AN1-type zinc finger spans residues 661–708; sequence KKTTNHCFLCGKKTGLASSYECRCGNNFCASHRYAETHGCTYDYKSAG. The Zn(2+) site is built by Cys667, Cys670, Cys682, Cys684, Cys689, His692, His698, and Cys700.

This is AN1-type zinc finger protein 4 (ZFAND4) from Homo sapiens (Human).